The chain runs to 2177 residues: Brefeldin A-inhibited guanine nucleotide-exchange protein 3 (2177 aa).

A compositionally biased stretch (low complexity) spans 282-295 (TSSTSTSLESDSAS). Residues 282–301 (TSSTSTSLESDSASPGVSDH) form a disordered region. Ser471 is modified (phosphoserine). Residues 511 to 524 (TGQTTLEGELGQTT) are compositionally biased toward polar residues. 3 disordered regions span residues 511-542 (TGQT…PAIP), 617-636 (AAEK…DNCS), and 1031-1076 (DGAS…LSTA). One can recognise an SEC7 domain in the interval 583–796 (RTRSYGSRYS…EELYHQVLDR (214 aa)). The segment covering 618 to 627 (AEKDSGRSDV) has biased composition (basic and acidic residues). Residues Ser632 and Ser636 each carry the phosphoserine modification. A compositionally biased stretch (polar residues) spans 1032–1047 (GASQPPLTISQPQKAT). Ser1049 carries the phosphoserine modification. The chain crosses the membrane as a helical span at residues 1492 to 1512 (GPGFGIYAVVHLLLPVMSVWL). Disordered regions lie at residues 1848–1877 (STDS…GKEK), 1946–2004 (ESST…RKKE), and 2033–2064 (KQQH…SPLL). Residues 1960–1974 (TPSEDDRSQSREHMG) are compositionally biased toward basic and acidic residues. Ser1991 carries the post-translational modification Phosphoserine. 2 stretches are compositionally biased toward basic and acidic residues: residues 1993 to 2004 (KVEKKDPSRKKE) and 2043 to 2052 (KEVKVEKKGE). Ser2079, Ser2081, Ser2095, Ser2101, and Ser2103 each carry phosphoserine. The disordered stretch occupies residues 2082–2103 (AGPELLRQDKRPRSGSTGSSLS).

As to quaternary structure, interacts with PHB2. Expressed in breast cancer cell lines. Not expressed in normal tissues such as duct, mammary gland, lung, heart, liver, kidnay, bone marrow.

The protein localises to the cytoplasm. Its subcellular location is the cytoplasmic vesicle. It is found in the secretory vesicle. The protein resides in the secretory vesicle membrane. Participates in the regulation of systemic glucose homeostasis, where it negatively regulates insulin granule biogenesis in pancreatic islet beta cells. Also regulates glucagon granule production in pancreatic alpha cells. Inhibits nuclear translocation of the transcriptional coregulator PHB2 and may enhance estrogen receptor alpha (ESR1) transcriptional activity in breast cancer cells. The sequence is that of Brefeldin A-inhibited guanine nucleotide-exchange protein 3 from Homo sapiens (Human).